A 181-amino-acid chain; its full sequence is Malignant T-cell-amplified sequence 1-B (181 aa).

In terms of domain architecture, PUA spans 92–171; sequence LPHQQVDKGA…IGIENIHYLN (80 aa).

The protein belongs to the MCTS1 family.

It is found in the cytoplasm. Its function is as follows. Plays a role as translation enhancer and involved in cell cycle regulation. The protein is Malignant T-cell-amplified sequence 1-B (mcts1-b) of Xenopus laevis (African clawed frog).